The following is a 350-amino-acid chain: Fe(2+) transport protein 2 (350 aa).

A signal peptide spans 1–21; the sequence is MATTKLVYILLILFTFTVSPA. At 22 to 47 the chain is on the extracellular side; that stretch reads ISTAPEHCDSGFDNPCINKAKALPLK. A helical membrane pass occupies residues 48–68; that stretch reads IVAIVAILTTSLIGVTSPLFS. The Cytoplasmic portion of the chain corresponds to 69–80; it reads RYISFLRPDGNG. The helical transmembrane segment at 81-101 threads the bilayer; sequence FMIVKCFSSGIILGTGFMHVL. The Extracellular portion of the chain corresponds to 102–120; sequence PDSFEMLSSKCLSDNPWHK. The chain crosses the membrane as a helical span at residues 121–141; the sequence is FPFAGFVAMMSGLVTLAIDSI. The Cytoplasmic segment spans residues 142–195; it reads TTSLYTGKNSVGPVPDEEYGIDQEKAIHMVGHNHSHGHGVVLATKDDGQLLRYQ. The chain crosses the membrane as a helical span at residues 196–216; sequence VIAMVLEVGILFHSVVIGLSL. Residues 217–227 lie on the Extracellular side of the membrane; the sequence is GATNDSCTIKG. A helical membrane pass occupies residues 228-248; sequence LIIALCFHHLFEGIGLGGCIL. The Cytoplasmic segment spans residues 249 to 257; sequence QADFTNVKK. The helical transmembrane segment at 258–278 threads the bilayer; it reads FLMAFFFTGTTPCGIFLGIAL. Residues 279-289 lie on the Extracellular side of the membrane; the sequence is SSIYRDNSPTA. A helical membrane pass occupies residues 290–310; the sequence is LITIGLLNACSAGMLIYMALV. Residues 311 to 329 are Cytoplasmic-facing; that stretch reads DLLATEFMGSMLQGSIKLQ. Residues 330 to 350 form a helical membrane-spanning segment; sequence IKCFTAALLGCAVMSVVAVWA.

This sequence belongs to the ZIP transporter (TC 2.A.5) family. As to expression, expressed in the external cell layers of the root subapical zone.

The protein localises to the cell membrane. Its function is as follows. High-affinity iron transporter that mediates under iron-deficiency the iron uptake from the rhizosphere across the plasma membrane in the root epidermal layer. Could also be capable of transporting zinc ions. The sequence is that of Fe(2+) transport protein 2 (IRT2) from Arabidopsis thaliana (Mouse-ear cress).